Here is a 262-residue protein sequence, read N- to C-terminus: MNKFLIIDGLNLVRRIYAAIPDETDMQSLTERVSSACTKLLRVHRPSHVAIVWDGDEISWRKQLYPDYKKGRKPMPEPLAQGLVALQDHLTAMHIGSIYAAAEADDVIATLAIKTAKAQGEAIIVSTDKGFSQLNHRHISQWDHFNQQYLDIAALEQKLGVERSQFLDLMALAGDSGNKIPGIAGIGPKSAAELLKTFRSLPTLFSSLSNLGAKQAKKLAEGKEMARLSYKLAQLQTDLPLNINLKDFRVIDSQPEKTINQD.

Asp105 provides a ligand contact to Mg(2+). The region spanning 162–259 (ERSQFLDLMA…VIDSQPEKTI (98 aa)) is the 5'-3' exonuclease domain. Positions 172, 173, 181, 183, and 186 each coordinate K(+). Positions 185-190 (GIGPKS) are interaction with DNA.

It belongs to the Xni family. It depends on Mg(2+) as a cofactor. K(+) is required as a cofactor.

In terms of biological role, has flap endonuclease activity. During DNA replication, flap endonucleases cleave the 5'-overhanging flap structure that is generated by displacement synthesis when DNA polymerase encounters the 5'-end of a downstream Okazaki fragment. The polypeptide is Flap endonuclease Xni (Shewanella baltica (strain OS185)).